Reading from the N-terminus, the 341-residue chain is Major histocompatibility complex class I-related protein 1 (341 aa).

The N-terminal stretch at 1 to 18 (MMLLLPLLAVFLVKRSHT) is a signal peptide. The alpha-1 stretch occupies residues 19-105 (RTHSLRYFRL…RHLQRHYNHS (87 aa)). An antigen-binding cleft region spans residues 19–197 (RTHSLRYFRL…EYGRDTLERT (179 aa)). Over 19–296 (RTHSLRYFRL…APRESGDILR (278 aa)) the chain is Extracellular. 2 residues coordinate 8-(9H-purin-6-yl)-2-oxa-8-azabicyclo[3.3.1]nona-3,6-diene-4,6-dicarbaldehyde: Tyr25 and Arg27. 5-(2-oxoethylideneamino)-6-(D-ribitylamino)uracil-binding residues include Arg27, Ser42, and Lys61. 3 residues coordinate 5-(2-oxopropylideneamino)-6-(D-ribitylamino)uracil: Arg27, Ser42, and Lys61. Residues Arg27, Ser42, and Lys61 each contribute to the 7-hydroxy-6-methyl-8-(1-D-ribityl)lumazine site. 8-(9H-purin-6-yl)-2-oxa-8-azabicyclo[3.3.1]nona-3,6-diene-4,6-dicarbaldehyde-binding residues include Lys61 and His76. Lys61 is a 2-amino-4-oxopteridine-6-carbaldehyde binding site. Lys61 contributes to the pyridoxal binding site. A glycan (N-linked (GlcNAc...) asparagine) is linked at Asn103. An alpha-2 region spans residues 106 to 197 (GLHTYQRMIG…EYGRDTLERT (92 aa)). Residue Arg112 participates in 8-(9H-purin-6-yl)-2-oxa-8-azabicyclo[3.3.1]nona-3,6-diene-4,6-dicarbaldehyde binding. Residues Arg112, Tyr170, and Gln171 each contribute to the 5-(2-oxoethylideneamino)-6-(D-ribitylamino)uracil site. 5-(2-oxopropylideneamino)-6-(D-ribitylamino)uracil is bound by residues Arg112, Tyr170, and Gln171. Residues Arg112, Tyr170, and Gln171 each contribute to the 7-hydroxy-6-methyl-8-(1-D-ribityl)lumazine site. Intrachain disulfides connect Cys116-Cys179 and Cys218-Cys274. An alpha-3 region spans residues 198–289 (EHPVVRTTRK…GRQMVLEAPR (92 aa)). An Ig-like C1-type domain is found at 200-301 (PVVRTTRKET…GDILRVSTIS (102 aa)). The tract at residues 290 to 296 (ESGDILR) is connecting peptide. The helical transmembrane segment at 297 to 317 (VSTISGTTILIIALAGVGVLI) threads the bilayer. The Cytoplasmic portion of the chain corresponds to 318–341 (WRRSQELKEVMYQPTQVNEGSSPS).

This sequence belongs to the MHC class I family. In terms of assembly, heterotrimer that consists of MR1, B2M and metabolite antigen. Major classes of metabolite ligands presented by MR1 include riboflavin-related antigens, pyrimidines and ribityl lumazines, nucleobase adducts and folate derivatives. Forms reversible covalent Schiff base complexes with microbial pyrimidine-based metabolite, which serves as a molecular switch triggering complete folding, stable association with B2M and translocation of the ternary complex from endoplasmic reticulum to the plasma membrane. Alternatively, forms non-Schiff base complexes with ribityl lumazines. On antigen-presenting cells, the ternary complex interacts with TCR on MR1-restricted CD4- or CD8-positive T cell subsets. Interacts with TAPBP and TAPBPL chaperones in the endoplasmic reticulum. TAPBP associated or not with MHC class I peptide loading complex binds ligand-free MR1 or MR1-B2M complex, providing for stable MR1 pools ready for metabolite antigen processing. TAPBPL interacts with MR1 in a ligand-independent way; this interaction may stabilize MR1 pool and facilitate ligand loading and dissociation. Structurally, MR1-B2M heterodimer adopts a topology similar to classical MHC class I molecules, with alpha-1 and alpha-2 domains of MR1 forming the antigen-binding cleft composed of two alpha-helices resting on a floor of 7-stranded anti-parallel beta-pleated sheet. Post-translationally, N-glycosylated. Highly expressed thymus. Expressed in liver, kidney, spleen, heart, brain, lung, skeletal muscle and testis.

It is found in the cell membrane. The protein resides in the endoplasmic reticulum membrane. The protein localises to the golgi apparatus membrane. Its subcellular location is the early endosome membrane. It localises to the late endosome membrane. Functionally, antigen-presenting molecule specialized in displaying microbial pyrimidine-based metabolites to alpha-beta T cell receptors (TCR) on innate-type mucosal-associated invariant T (MAIT) cells. In complex with B2M preferentially presents riboflavin-derived metabolites to semi-invariant TRAV1 TCRs on MAIT cells, guiding immune surveillance of the microbial metabolome at mucosal epithelial barriers. Signature pyrimidine-based microbial antigens are generated via non-enzymatic condensation of metabolite intermediates of the riboflavin pathway with by-products arising from other metabolic pathways such as glycolysis. Typical potent antigenic metabolites are 5-(2-oxoethylideneamino)-6-D-ribitylaminouracil (5-OE-RU) and 5-(2-oxopropylideneamino)-6-D-ribitylaminouracil (5-OP-RU), products of condensation of 5-amino-6-D-ribityaminouracil (5-A-RU) with glyoxal or methylglyoxal by-products, respectively. May present microbial antigens to various TRAV1-negative MAIT cell subsets, providing for unique recognition of diverse microbes, including pathogens that do not synthesize riboflavin. Upon antigen recognition, elicits rapid innate-type MAIT cell activation to eliminate pathogenic microbes by directly killing infected cells. During T cell development, drives thymic selection and post-thymic terminal differentiation of MAIT cells in a process dependent on commensal microflora. Acts as an immune sensor of cancer cell metabolome. May present a tumor-specific or -associated metabolite essential for cancer cell survival to a pan-cancer TCR on a non-MAIT CD8-positive T cell clone, triggering T cell-mediated killing of a wide range of cancer cell types. May present tumor-enriched pyridoxal and pyridoxal 5'-phosphate antigens, enabling preferential recognition of cancer cells. Presents nucleobase carbonyl adducts generated during oxidative stress. Captures M3Ade, a nucleobase adduct composed of one adenine modified by a malondialdehyde trimer, for recognition by MR1-restricted T cell clones expressing a polyclonal TCR repertoire. This chain is Major histocompatibility complex class I-related protein 1, found in Mus musculus (Mouse).